The chain runs to 383 residues: Paralemmin-1 (383 aa).

An N-acetylmethionine modification is found at Met1. The stretch at 7–101 forms a coiled coil; that stretch reads DTVSQQERLQ…EKEIDVLEFG (95 aa). 3 disordered regions span residues 51–164, 242–293, and 333–374; these read RERW…STMM, TLSE…QPGQ, and SVTP…DMKK. A compositionally biased stretch (basic and acidic residues) spans 69–96; sequence DMRKQMQEDEQKARSLEESITRLEKEID. 3 positions are modified to phosphoserine: Ser116, Ser122, and Ser124. A compositionally biased stretch (polar residues) spans 133–143; sequence ETMVNAQQTPL. Phosphothreonine is present on residues Thr141, Thr145, and Thr153. Phosphoserine occurs at positions 157 and 161. Thr242 carries the post-translational modification Phosphothreonine. Ser244 is subject to Phosphoserine. Positions 257–273 are enriched in basic and acidic residues; sequence GLAEDVTRTTPSRREIT. A Phosphoserine modification is found at Ser345. Positions 357–367 are enriched in polar residues; that stretch reads QTGPTTTPSDT. 3 positions are modified to phosphothreonine: Thr361, Thr362, and Thr363. Ser365 is subject to Phosphoserine. Residue Thr367 is modified to Phosphothreonine. Residues Cys377 and Cys379 are each lipidated (S-palmitoyl cysteine). Cys380 carries the post-translational modification Cysteine methyl ester. Cys380 is lipidated: S-farnesyl cysteine. A propeptide spans 381–383 (removed in mature form); that stretch reads SVM.

This sequence belongs to the paralemmin family. Interacts with dopamine receptor DRD3. In terms of tissue distribution, expressed in neurons cells of neuropil-rich areas of the brain, in the Purkinje cells of the cerebellum, in cells of the cerebral cortex, hippocampus, brainstem nuclei and glial processes and sheaths. Expressed in the medulla of the adrenal chromaffin cells and renal duct cells (at protein level).

It is found in the cell membrane. The protein localises to the cell projection. It localises to the filopodium membrane. The protein resides in the axon. Its subcellular location is the dendrite. It is found in the dendritic spine. The protein localises to the basolateral cell membrane. It localises to the apicolateral cell membrane. Involved in plasma membrane dynamics and cell process formation. Necessary for axonal and dendritic filopodia induction, for dendritic spine maturation and synapse formation in a palmitoylation-dependent manner. This chain is Paralemmin-1 (Palm), found in Rattus norvegicus (Rat).